Consider the following 243-residue polypeptide: Bidirectional sugar transporter SWEET2a (243 aa).

Residues 1-23 (MDWAAPALTSFVADSSYRHLCCY) are Extracellular-facing. Residues 24-44 (GAGIAGNVFAFVLFISPLPTF) traverse the membrane as a helical segment. One can recognise a MtN3/slv 1 domain in the interval 24–111 (GAGIAGNVFA…AVFIAFADAK (88 aa)). Over 45–57 (KRIVRNGSTEQFS) the chain is Cytoplasmic. The chain crosses the membrane as a helical span at residues 58-80 (AMPYIYSLLNCLICMWYGLPFVS). Residues 81–89 (YGVVLVATV) are Extracellular-facing. Residues 90-110 (NSIGAVFQLAYTAVFIAFADA) form a helical membrane-spanning segment. Over 111-117 (KQRLKVS) the chain is Cytoplasmic. A helical membrane pass occupies residues 118-138 (ALLAAVFVVFGLIVFVSLALL). Residues 139 to 145 (DHPTRQM) lie on the Extracellular side of the membrane. Residues 146 to 166 (FVGYLSVASLIFMFASPLSII) traverse the membrane as a helical segment. Residues 147 to 230 (VGYLSVASLI…VLYAYFRKGS (84 aa)) form the MtN3/slv 2 domain. The Cytoplasmic segment spans residues 167-179 (NLVIRTKSVEYMP). The helical transmembrane segment at 180–200 (FYLSLSMFLMSASFFGYGVLL) threads the bilayer. Residues 201-202 (ND) lie on the Extracellular side of the membrane. Residues 203-223 (FFIYIPNGIGTILGIIQLVLY) form a helical membrane-spanning segment. The Cytoplasmic segment spans residues 224–243 (AYFRKGSSEEAKLPLLVTHT).

This sequence belongs to the SWEET sugar transporter family. Forms homooligomers and/or heterooligomers.

Its subcellular location is the cell membrane. Functionally, mediates both low-affinity uptake and efflux of sugar across the plasma membrane. This is Bidirectional sugar transporter SWEET2a from Sorghum bicolor (Sorghum).